The chain runs to 528 residues: UDP-glucuronosyltransferase 2B30 (528 aa).

The signal sequence occupies residues 1–23 (MSMKWTSALLLIQLSCYLSSGNC). N6-succinyllysine is present on Lys135. Asn315 carries an N-linked (GlcNAc...) asparagine glycan. The helical transmembrane segment at 493 to 513 (VIGFLLACVATVIFIITKCLF) threads the bilayer.

The protein belongs to the UDP-glycosyltransferase family. Expressed in several tissues, including prostate, testis, mammary gland, kidney, adrenals and intestine.

The protein resides in the microsome membrane. It localises to the endoplasmic reticulum membrane. It carries out the reaction glucuronate acceptor + UDP-alpha-D-glucuronate = acceptor beta-D-glucuronoside + UDP + H(+). Its function is as follows. UDPGTs are of major importance in the conjugation and subsequent elimination of potentially toxic xenobiotics and endogenous compounds. This isozyme has glucuronidating capacity on testosterone, dihydrotestosterone, 5-alpha-androstane-3-alpha,17-beta-diol, androsterone, oestradiol, tetrahydroaldosterone and tetrahydrocortisone. This enzyme is essential to inactivation of several steroids. This Macaca fascicularis (Crab-eating macaque) protein is UDP-glucuronosyltransferase 2B30 (UGT2B30).